The sequence spans 343 residues: Biotin synthase 2 (343 aa).

The 228-residue stretch at 58–285 (NEVQLSTLLS…LTMVRLSAGR (228 aa)) folds into the Radical SAM core domain. Residues Cys73, Cys77, and Cys80 each coordinate [4Fe-4S] cluster. [2Fe-2S] cluster-binding residues include Cys117, Cys148, Cys208, and Arg280.

Belongs to the radical SAM superfamily. Biotin synthase family. As to quaternary structure, homodimer. It depends on [4Fe-4S] cluster as a cofactor. The cofactor is [2Fe-2S] cluster.

It catalyses the reaction (4R,5S)-dethiobiotin + (sulfur carrier)-SH + 2 reduced [2Fe-2S]-[ferredoxin] + 2 S-adenosyl-L-methionine = (sulfur carrier)-H + biotin + 2 5'-deoxyadenosine + 2 L-methionine + 2 oxidized [2Fe-2S]-[ferredoxin]. It participates in cofactor biosynthesis; biotin biosynthesis; biotin from 7,8-diaminononanoate: step 2/2. Catalyzes the conversion of dethiobiotin (DTB) to biotin by the insertion of a sulfur atom into dethiobiotin via a radical-based mechanism. The polypeptide is Biotin synthase 2 (Polaromonas sp. (strain JS666 / ATCC BAA-500)).